The following is a 122-amino-acid chain: Antitoxin protein TsiV3 (122 aa).

The N-terminal stretch at 1 to 24 (MNNLLSAYVTMLLILLSISGGAIA) is a signal peptide. 2 disulfides stabilise this stretch: Cys28/Cys41 and Cys82/Cys100.

In terms of assembly, homodimer; dimerization is critical for inhibitory activity. Forms a heterotetramer with VgrG3 composed of one TsiV3 homodimer and two VgrG3 molecules.

Functionally, immunity protein that plays a role in preventing early activation of toxin VgrG3. The sequence is that of Antitoxin protein TsiV3 from Vibrio cholerae serotype O1 (strain ATCC 39315 / El Tor Inaba N16961).